The following is a 480-amino-acid chain: Immune evasion protein OPG047 (480 aa).

The region spanning 10 to 90 (CKNILALSMT…SYTGKVYIDS (81 aa)) is the BTB domain. A BACK domain is found at 125–223 (CVECYMMGIE…NYLSPRGINN (99 aa)). Kelch repeat units lie at residues 273 to 319 (VVYL…PANN), 320 to 363 (KLYV…SINN), 365 to 408 (IYVM…VFGR), 410 to 447 (LFLVGRNAEFYCESSNTWTLIDDPIYPRDNPELIIVDN), and 448 to 480 (KLLLIGGFYRGSYIDTIEVYNHHTYSWNIWDGK).

This sequence belongs to the orthopoxvirus OPG047 family.

In terms of biological role, might have a role in the suppression of host immune response. This is Immune evasion protein OPG047 (OPG047) from Vaccinia virus (strain Copenhagen) (VACV).